The sequence spans 458 residues: MENIWLEAQTNLKQVLTEQTYSTWIDPLKFLGATVDTIVLEVPSSFFQKWVTDKYLAMIKEAISAVNGKSYQIEFHVAEEKPEAAHEAKPEKEAKPAREKERDKDKEKEKDREKEKKELVPNLNPKYTFESFVSGPSNQFAYAASQAVANKPATNYNPLFIYGGVGLGKTHLVNAIGNHILAKNPKAKICYYSSEKFMNEMINSLRYKKMDEFRNKFRKMDLLLIDDIQFMAGKEATQEEFFHTFNALYESHKQIVVTSDKFPKDIPGLEERLRSRFEWGLIADIQPPGVETKVAILKKKSDMHAVNLPDDVALFLAEGANSNIRELEGMLIRLEAFASLTGQEITLSMAREVMKDIIVEKTRDITVEMIQKTVAEHFRIKVSELKSDKRIKTLVVPRQIAIYICRELTKASYPEIGEKFGGKDHSTIIHSVKKIEKQIAGDDEFKATVEDIRKKLFT.

Residues Met-1 to Ala-84 form a domain I, interacts with DnaA modulators region. Basic and acidic residues predominate over residues Glu-80 to Leu-119. Residues Glu-80–Val-120 are disordered. Positions Ala-84–Pro-121 are domain II. The domain III, AAA+ region stretch occupies residues Asn-122–Ala-338. Residues Gly-166, Gly-168, Lys-169, and Thr-170 each contribute to the ATP site. A domain IV, binds dsDNA region spans residues Ser-339 to Thr-458.

The protein belongs to the DnaA family. As to quaternary structure, oligomerizes as a right-handed, spiral filament on DNA at oriC.

The protein resides in the cytoplasm. Functionally, plays an essential role in the initiation and regulation of chromosomal replication. ATP-DnaA binds to the origin of replication (oriC) to initiate formation of the DNA replication initiation complex once per cell cycle. Binds the DnaA box (a 9 base pair repeat at the origin) and separates the double-stranded (ds)DNA. Forms a right-handed helical filament on oriC DNA; dsDNA binds to the exterior of the filament while single-stranded (ss)DNA is stabiized in the filament's interior. The ATP-DnaA-oriC complex binds and stabilizes one strand of the AT-rich DNA unwinding element (DUE), permitting loading of DNA polymerase. After initiation quickly degrades to an ADP-DnaA complex that is not apt for DNA replication. Binds acidic phospholipids. The protein is Chromosomal replication initiator protein DnaA of Citrifermentans bemidjiense (strain ATCC BAA-1014 / DSM 16622 / JCM 12645 / Bem) (Geobacter bemidjiensis).